The primary structure comprises 435 residues: 26S proteasome regulatory subunit 7 (435 aa).

Positions 1–23 (MPDHLGDDMRKTKKDDTKEEEKN) are enriched in basic and acidic residues. The interval 1–24 (MPDHLGDDMRKTKKDDTKEEEKNF) is disordered. Residue 218–225 (GPPGTGKT) participates in ATP binding.

The protein belongs to the AAA ATPase family.

The protein resides in the cytoplasm. It localises to the nucleus. The 26S proteasome is involved in the ATP-dependent degradation of ubiquitinated proteins. The regulatory (or ATPase) complex confers ATP dependency and substrate specificity to the 26S complex. This Caenorhabditis elegans protein is 26S proteasome regulatory subunit 7 (rpt-1).